A 75-amino-acid chain; its full sequence is Small ribosomal subunit protein bS18 (75 aa).

It belongs to the bacterial ribosomal protein bS18 family. Part of the 30S ribosomal subunit. Forms a tight heterodimer with protein bS6.

Functionally, binds as a heterodimer with protein bS6 to the central domain of the 16S rRNA, where it helps stabilize the platform of the 30S subunit. The sequence is that of Small ribosomal subunit protein bS18 from Photobacterium profundum (strain SS9).